A 469-amino-acid chain; its full sequence is MRGLIDPDLLFPAEERTRALARRLYAEVSGLPIVSPHGHTEPRWYALDEAFPDPAQLLIVPDHYVFRMLFSQGIRLEELGVPALDGSPVETDGRAIWRRFCENYHLFRGTPTRLWFDYTLSELFGIDELPSAASSDPLYDHVAECLTRPDYRPRALYERFNIEVISTTDSALDDLGWHAKILESGWKGRVVPAYRPDAVVDPDFQGFPTNLDKLGDITGADTGTWSGYLDAHRTRRAYFKDFGATSTDHGHATADTANLPQAEAAALFDKVRLGKANADERRLFRAQMLTEMAKMSLDDGLVMQIHPGSFRNHSPAILAKFGRDKGFDIPTRTDYVTALKPLLDAVGLERDLTVILFTLDETSYARELAPLAGVYPALKLGPAWWFHDSAEGMRRFREMTTETAGFYNTVGFNDDTRAFPSIPARHDIARRVDCAFLARLVAEHRLREDEAYELARDLAYGLAKEAYRL.

The protein belongs to the metallo-dependent hydrolases superfamily. Uronate isomerase family.

It catalyses the reaction D-glucuronate = D-fructuronate. The enzyme catalyses aldehydo-D-galacturonate = keto-D-tagaturonate. The protein operates within carbohydrate metabolism; pentose and glucuronate interconversion. This Rhizobium meliloti (strain 1021) (Ensifer meliloti) protein is Uronate isomerase.